A 156-amino-acid chain; its full sequence is Small ribosomal subunit protein uS7 (156 aa).

The protein belongs to the universal ribosomal protein uS7 family. As to quaternary structure, part of the 30S ribosomal subunit. Contacts proteins S9 and S11.

One of the primary rRNA binding proteins, it binds directly to 16S rRNA where it nucleates assembly of the head domain of the 30S subunit. Is located at the subunit interface close to the decoding center, probably blocks exit of the E-site tRNA. This is Small ribosomal subunit protein uS7 from Rhizorhabdus wittichii (strain DSM 6014 / CCUG 31198 / JCM 15750 / NBRC 105917 / EY 4224 / RW1) (Sphingomonas wittichii).